A 772-amino-acid polypeptide reads, in one-letter code: Magnetosome formation protease MamE (772 aa).

The Cytoplasmic portion of the chain corresponds to 1–21 (MTMFNGDVEDGGRSNVSCGKD). Residues 22–42 (LKRYLMLMGVVALVVLFGAFI) traverse the membrane as a helical segment. Over 43-772 (YRQSSGGLRL…RNGQEFWIVL (730 aa)) the chain is Lumenal. Residues histidine 187, aspartate 220, and serine 296 each act as charge relay system in the active site. An MCR (magnetochrome) 1 motif is present at residues 374–397 (IAAGTPSPHVDGRQNMDCSNCHDI). Residues cysteine 391, cysteine 394, histidine 395, cysteine 437, cysteine 440, histidine 441, cysteine 488, cysteine 491, and histidine 492 each contribute to the heme site. 2 short sequence motifs (MCR) span residues 420-443 (IPAN…CHQF) and 470-494 (AIRA…CHQI). The Cytochrome c domain occupies 445-558 (GGAAAGPIAF…ALTPLTQRLG (114 aa)). 2 consecutive PDZ domains span residues 522–626 (AINI…LRAG) and 696–765 (GATP…HRNG).

In the N-terminal section; belongs to the peptidase S1C family. In terms of assembly, might interact with MamB via PDZ1. It depends on heme as a cofactor. Post-translationally, the protein isolated from magnetosome membranes has a molecular weight of about 36.3 kDa, probably due to C-terminal cleavage. Subject to autocatalytic cleavage; cleavage also requires MamO; these may be the same event.

Its subcellular location is the magnetosome membrane. In terms of biological role, acts at 2 distinct steps of magnetosome formation; required for correct localization of proteins to the magnetosome while the protease activity is required for maturation of small magnetite crystals into larger, functional ones. Probably cleaves at least itself, MamO and MamP; cleavage requires the putative transprot domain of MamO. Involved in localization of some proteins (at least MamA, MamC, MamF, MamI and MamJ) to the magnetosome. One of 7 genes (mamLQBIEMO) able to induce magnetosome membrane biogenesis; coexpression of mamLQRBIEMO in a deletion of the 17 gene mamAB operon restores magnetosome vesicle formation but not magnetite biosynthesis. The chain is Magnetosome formation protease MamE from Magnetospirillum gryphiswaldense (strain DSM 6361 / JCM 21280 / NBRC 15271 / MSR-1).